The chain runs to 359 residues: Serine/threonine-protein kinase SAPK7 (359 aa).

In terms of domain architecture, Protein kinase spans 4 to 260; the sequence is YELLKDIGAG…IREIRNHPWF (257 aa). ATP contacts are provided by residues 10–18 and K33; that span reads IGAGNFGVA. The active-site Proton acceptor is D123. The segment at 299-359 is disordered; the sequence is EEARTPPRSS…VHASGEFQLS (61 aa). Positions 331–343 are enriched in acidic residues; that stretch reads EEQEEEEDAEDEY.

It belongs to the protein kinase superfamily. Ser/Thr protein kinase family. Post-translationally, may be phosphorylated. As to expression, weakly expressed in roots. Expressed in roots of young seedlings.

It is found in the cytoplasm. It localises to the nucleus. It carries out the reaction L-seryl-[protein] + ATP = O-phospho-L-seryl-[protein] + ADP + H(+). It catalyses the reaction L-threonyl-[protein] + ATP = O-phospho-L-threonyl-[protein] + ADP + H(+). Activated by hyperosmotic stress. Its function is as follows. May play a role in signal transduction of hyperosmotic response. The protein is Serine/threonine-protein kinase SAPK7 (SAPK7) of Oryza sativa subsp. japonica (Rice).